The chain runs to 343 residues: UDP-3-O-acylglucosamine N-acyltransferase (343 aa).

His-248 serves as the catalytic Proton acceptor.

Belongs to the transferase hexapeptide repeat family. LpxD subfamily. As to quaternary structure, homotrimer.

The catalysed reaction is a UDP-3-O-[(3R)-3-hydroxyacyl]-alpha-D-glucosamine + a (3R)-hydroxyacyl-[ACP] = a UDP-2-N,3-O-bis[(3R)-3-hydroxyacyl]-alpha-D-glucosamine + holo-[ACP] + H(+). It participates in bacterial outer membrane biogenesis; LPS lipid A biosynthesis. Its function is as follows. Catalyzes the N-acylation of UDP-3-O-acylglucosamine using 3-hydroxyacyl-ACP as the acyl donor. Is involved in the biosynthesis of lipid A, a phosphorylated glycolipid that anchors the lipopolysaccharide to the outer membrane of the cell. The chain is UDP-3-O-acylglucosamine N-acyltransferase from Microcystis aeruginosa (strain NIES-843 / IAM M-2473).